Reading from the N-terminus, the 215-residue chain is 3-demethoxyubiquinol 3-hydroxylase (215 aa).

Fe cation-binding residues include E64, E94, H97, E146, E178, and H181.

This sequence belongs to the COQ7 family. It depends on Fe cation as a cofactor.

It localises to the cell membrane. The catalysed reaction is a 5-methoxy-2-methyl-3-(all-trans-polyprenyl)benzene-1,4-diol + AH2 + O2 = a 3-demethylubiquinol + A + H2O. The protein operates within cofactor biosynthesis; ubiquinone biosynthesis. Its function is as follows. Catalyzes the hydroxylation of 2-nonaprenyl-3-methyl-6-methoxy-1,4-benzoquinol during ubiquinone biosynthesis. The protein is 3-demethoxyubiquinol 3-hydroxylase of Pseudomonas aeruginosa (strain LESB58).